A 275-amino-acid chain; its full sequence is Light-independent protochlorophyllide reductase iron-sulfur ATP-binding protein (275 aa).

Residues 12 to 17 (GIGKST) and lysine 41 contribute to the ATP site. Serine 16 serves as a coordination point for Mg(2+). Residues cysteine 97 and cysteine 131 each coordinate [4Fe-4S] cluster. 182-183 (NR) is an ATP binding site.

Belongs to the NifH/BchL/ChlL family. Homodimer. Protochlorophyllide reductase is composed of three subunits; BchL, BchN and BchB. [4Fe-4S] cluster is required as a cofactor.

It carries out the reaction chlorophyllide a + oxidized 2[4Fe-4S]-[ferredoxin] + 2 ADP + 2 phosphate = protochlorophyllide a + reduced 2[4Fe-4S]-[ferredoxin] + 2 ATP + 2 H2O. It participates in porphyrin-containing compound metabolism; bacteriochlorophyll biosynthesis (light-independent). Component of the dark-operative protochlorophyllide reductase (DPOR) that uses Mg-ATP and reduced ferredoxin to reduce ring D of protochlorophyllide (Pchlide) to form chlorophyllide a (Chlide). This reaction is light-independent. The L component serves as a unique electron donor to the NB-component of the complex, and binds Mg-ATP. The protein is Light-independent protochlorophyllide reductase iron-sulfur ATP-binding protein of Chlorobium phaeovibrioides (strain DSM 265 / 1930) (Prosthecochloris vibrioformis (strain DSM 265)).